The primary structure comprises 1381 residues: DNA-directed RNA polymerase subunit beta (1381 aa).

It belongs to the RNA polymerase beta chain family. As to quaternary structure, the RNAP catalytic core consists of 2 alpha, 1 beta, 1 beta' and 1 omega subunit. When a sigma factor is associated with the core the holoenzyme is formed, which can initiate transcription.

The catalysed reaction is RNA(n) + a ribonucleoside 5'-triphosphate = RNA(n+1) + diphosphate. Its function is as follows. DNA-dependent RNA polymerase catalyzes the transcription of DNA into RNA using the four ribonucleoside triphosphates as substrates. The protein is DNA-directed RNA polymerase subunit beta of Sulfurimonas denitrificans (strain ATCC 33889 / DSM 1251) (Thiomicrospira denitrificans (strain ATCC 33889 / DSM 1251)).